Here is a 492-residue protein sequence, read N- to C-terminus: Putative transporter SVOPL (492 aa).

10 helical membrane-spanning segments follow: residues 48–68 (IALF…IMLI), 86–106 (VALV…LFGL), 121–141 (FLWG…IWFV), 179–199 (VFWL…IPTI), 203–223 (WLIR…KFIP), 281–301 (TLQI…VILA), 348–368 (IIST…INFL), 383–403 (LFFL…FLFM), 429–449 (ALGM…APFI), and 458–478 (ILGA…SAFT).

The protein belongs to the major facilitator superfamily.

It is found in the membrane. This is Putative transporter SVOPL (SVOPL) from Homo sapiens (Human).